A 574-amino-acid polypeptide reads, in one-letter code: MSLPSPSPSRELCPPDPAFAPLSSWPGSGPAGGSTRSGHVLYSGWLRKSPPEKKLRLFAWRKRWFILRRGQTSSDPDVLEYYKNDGSKKPLRTINLNLCEQLDVDVTLNFNKKEIQKGYMFDIKTSERTFYLVAETREDMNEWVQSICQICGFRQEESTGFLGNISSASHGLCSSPAEPSCSHQHLPQEQEPTSEPPVSHCVPPTWPIPAPPGCLRSHQHASQRAEHARSASFSQGSEAPFIMRRNTAMQNLAQHSGYSVDGVSGHIHGFHSLSKPSQHNAEFRGSTHRIPWSLASHGHTRGSLTGSEADNEASSGKYTQHGGGNASRPAESMHEGVCSFLPGRTLVGLSDSIASEGSCVPMNPGSPTLPAVKQAGDDSQGVCIPVGSCLVRFDLLGSPLTELSMHQDLSQGHEVQLPPVNRSLKPNQKANPTPPNLRNNRVINELSFKPPVTEPWSGTSHTFDSSSSQHPISTQSITNTDSEDSGERYLFPNPASAFPVSGGTSSSAPPRSTGNIHYAALDFQPSKPSIGSVTSGKKVDYVQVDLEKTQALQKTMHEQMCLRQSSEPPRGAKL.

The segment at 1 to 33 (MSLPSPSPSRELCPPDPAFAPLSSWPGSGPAGG) is disordered. The PH domain occupies 39 to 152 (HVLYSGWLRK…WVQSICQICG (114 aa)). Disordered stretches follow at residues 176–200 (PAEP…PVSH), 215–234 (LRSH…ASFS), 293–331 (SLAS…RPAE), and 418–513 (PPVN…PRST). A compositionally biased stretch (polar residues) spans 181-193 (CSHQHLPQEQEPT). Composition is skewed to polar residues over residues 302–318 (GSLT…SGKY) and 424–442 (LKPN…NNRV). Residues 457–478 (SGTSHTFDSSSSQHPISTQSIT) show a composition bias toward low complexity. Polar residues predominate over residues 502 to 513 (GGTSSSAPPRST).

It belongs to the GAB family.

This is GRB2-associated-binding protein 4 (GAB4) from Homo sapiens (Human).